A 413-amino-acid polypeptide reads, in one-letter code: Protein arginine N-methyltransferase 2 (413 aa).

The segment at 148 to 187 is disordered; the sequence is LDGSDTEMGDKGGSARDVPASADSAPADSAGHSSSEPTAV. Positions 162 to 182 are enriched in low complexity; that stretch reads ARDVPASADSAPADSAGHSSS. The region spanning 192-413 is the RMT2 domain; it reads TAAHQDTYLQ…HYYHPEISFQ (222 aa). S-adenosyl-L-methionine contacts are provided by residues Tyr199, Met229, 252–257, 273–275, 300–301, and Asp321; these read FGMGII, EAH, and WQ.

This sequence belongs to the class I-like SAM-binding methyltransferase superfamily. RMT2 methyltransferase family. In terms of assembly, monomer.

The protein localises to the cytoplasm. It is found in the nucleus. S-adenosyl-L-methionine-dependent protein-arginine N-methyltransferase that methylates the delta-nitrogen atom of arginine residues to form N5-methylarginine (type IV) in target proteins. Monomethylates ribosomal protein L12. The chain is Protein arginine N-methyltransferase 2 from Eremothecium gossypii (strain ATCC 10895 / CBS 109.51 / FGSC 9923 / NRRL Y-1056) (Yeast).